The sequence spans 130 residues: Aspartate 1-decarboxylase (130 aa).

The Schiff-base intermediate with substrate; via pyruvic acid role is filled by serine 25. A Pyruvic acid (Ser) modification is found at serine 25. Position 57 (threonine 57) interacts with substrate. Tyrosine 58 (proton donor) is an active-site residue. 73-75 contacts substrate; that stretch reads GAA.

The protein belongs to the PanD family. As to quaternary structure, heterooctamer of four alpha and four beta subunits. Requires pyruvate as cofactor. Is synthesized initially as an inactive proenzyme, which is activated by self-cleavage at a specific serine bond to produce a beta-subunit with a hydroxyl group at its C-terminus and an alpha-subunit with a pyruvoyl group at its N-terminus.

It is found in the cytoplasm. The catalysed reaction is L-aspartate + H(+) = beta-alanine + CO2. It participates in cofactor biosynthesis; (R)-pantothenate biosynthesis; beta-alanine from L-aspartate: step 1/1. Functionally, catalyzes the pyruvoyl-dependent decarboxylation of aspartate to produce beta-alanine. This chain is Aspartate 1-decarboxylase, found in Myxococcus xanthus (strain DK1622).